The sequence spans 222 residues: Probable nicotinate-nucleotide adenylyltransferase (222 aa).

The protein belongs to the NadD family.

The catalysed reaction is nicotinate beta-D-ribonucleotide + ATP + H(+) = deamido-NAD(+) + diphosphate. It participates in cofactor biosynthesis; NAD(+) biosynthesis; deamido-NAD(+) from nicotinate D-ribonucleotide: step 1/1. In terms of biological role, catalyzes the reversible adenylation of nicotinate mononucleotide (NaMN) to nicotinic acid adenine dinucleotide (NaAD). In Stenotrophomonas maltophilia (strain K279a), this protein is Probable nicotinate-nucleotide adenylyltransferase.